Consider the following 69-residue polypeptide: Conotoxin Eb6.1 (69 aa).

Residues 1–17 (VLIIAVLFLTACQLTTA) form the signal peptide. The propeptide occupies 18 to 41 (ETYSRGRQKHRARRSTDKNSKWTR). 3 cysteine pairs are disulfide-bonded: Cys43/Cys57, Cys50/Cys61, and Cys56/Cys68.

Belongs to the conotoxin O1 superfamily. As to expression, expressed by the venom duct.

The protein resides in the secreted. This chain is Conotoxin Eb6.1 (E1), found in Conus ebraeus (Hebrew cone).